The following is a 162-amino-acid chain: MTLRIGHGFDVHRFGDGDHLMIGGVRIPYVQGFVAHSDGDVLLHAICDALLGACALGDIGRHFPDTDAAWAGADSRDLLRHVHTLVMAAGYAVANLDATVIAQAPRMAEHIPAMRACIAEDLDLDTTAVNVKATTSERLGFTGRKEGIAAEAVVLLMPTGTT.

The a divalent metal cation site is built by Asp10 and His12. 4-CDP-2-C-methyl-D-erythritol 2-phosphate-binding positions include 10-12 and 36-37; these read DVH and HS. His44 lines the a divalent metal cation pocket. Residues 58–60, 63–67, 102–108, 134–137, Phe141, and Arg144 contribute to the 4-CDP-2-C-methyl-D-erythritol 2-phosphate site; these read DIG, FPDTD, AQAPRMA, and TTSE.

Belongs to the IspF family. As to quaternary structure, homotrimer. The cofactor is a divalent metal cation.

The enzyme catalyses 4-CDP-2-C-methyl-D-erythritol 2-phosphate = 2-C-methyl-D-erythritol 2,4-cyclic diphosphate + CMP. It participates in isoprenoid biosynthesis; isopentenyl diphosphate biosynthesis via DXP pathway; isopentenyl diphosphate from 1-deoxy-D-xylulose 5-phosphate: step 4/6. Its function is as follows. Involved in the biosynthesis of isopentenyl diphosphate (IPP) and dimethylallyl diphosphate (DMAPP), two major building blocks of isoprenoid compounds. Catalyzes the conversion of 4-diphosphocytidyl-2-C-methyl-D-erythritol 2-phosphate (CDP-ME2P) to 2-C-methyl-D-erythritol 2,4-cyclodiphosphate (ME-CPP) with a corresponding release of cytidine 5-monophosphate (CMP). This Chromohalobacter salexigens (strain ATCC BAA-138 / DSM 3043 / CIP 106854 / NCIMB 13768 / 1H11) protein is 2-C-methyl-D-erythritol 2,4-cyclodiphosphate synthase.